Reading from the N-terminus, the 423-residue chain is Serine--tRNA ligase (423 aa).

An L-serine-binding site is contributed by 231-233 (TGE). 262–264 (RQE) serves as a coordination point for ATP. Position 285 (Glu-285) interacts with L-serine. 349-352 (EISS) serves as a coordination point for ATP. Ser-385 lines the L-serine pocket.

It belongs to the class-II aminoacyl-tRNA synthetase family. Type-1 seryl-tRNA synthetase subfamily. As to quaternary structure, homodimer. The tRNA molecule binds across the dimer.

The protein localises to the cytoplasm. The enzyme catalyses tRNA(Ser) + L-serine + ATP = L-seryl-tRNA(Ser) + AMP + diphosphate + H(+). It carries out the reaction tRNA(Sec) + L-serine + ATP = L-seryl-tRNA(Sec) + AMP + diphosphate + H(+). It participates in aminoacyl-tRNA biosynthesis; selenocysteinyl-tRNA(Sec) biosynthesis; L-seryl-tRNA(Sec) from L-serine and tRNA(Sec): step 1/1. Functionally, catalyzes the attachment of serine to tRNA(Ser). Is also able to aminoacylate tRNA(Sec) with serine, to form the misacylated tRNA L-seryl-tRNA(Sec), which will be further converted into selenocysteinyl-tRNA(Sec). In Phytoplasma mali (strain AT), this protein is Serine--tRNA ligase.